Reading from the N-terminus, the 413-residue chain is Ureide permease 5 (413 aa).

At 1–18 (MMIAQELGIYVVESKGGA) the chain is on the extracellular side. Residues 19-39 (ILCLLLSLLCLGTWPALMALL) form a helical membrane-spanning segment. Over 40-50 (ERRGRLPQHTY) the chain is Cytoplasmic. Residues 51-71 (LDYSITNFLAAIFIAFVFGGI) traverse the membrane as a helical segment. Residues 72–91 (GESTHEAPSFITQLTQIQDN) are Extracellular-facing. A helical membrane pass occupies residues 92–112 (WPSVLFAMAGGVGLSIGNLAT). Over 113 to 115 (QYS) the chain is Cytoplasmic. Residues 116-136 (LAFVGLSVTEVTAASITVVVG) traverse the membrane as a helical segment. Residues 137–149 (TTVNYFLDNGLNR) are Extracellular-facing. The chain crosses the membrane as a helical span at residues 150–170 (ADILFSGVGCFMVAVCLGSAV). Residues 171 to 240 (HSSNSADIKA…RAIKVLGKSM (70 aa)) are Cytoplasmic-facing. An ATP-binding site is contributed by 232–239 (AIKVLGKS). Residues 241 to 261 (VVGLGITFFAGLSFSLFSPLF) form a helical membrane-spanning segment. Residues 262 to 278 (NLATNDQWHTLKQGVPK) lie on the Extracellular side of the membrane. A helical transmembrane segment spans residues 279-299 (LIVYTAFFYFSLSCFVIAVAL). Topologically, residues 300-326 (NISFLYKPVLDSPRSSFREYLSDWNGR) are cytoplasmic. The helical transmembrane segment at 327-347 (GWALAAGLLCGFGNGLQFMGG) threads the bilayer. Residues 348–352 (QAAGY) are Extracellular-facing. The helical transmembrane segment at 353 to 373 (AASDAVQALPLVSTFWGIYLF) threads the bilayer. The Cytoplasmic portion of the chain corresponds to 374-384 (GEYRRSSTRTY). Residues 385–405 (ALLVGMLVMFTVAVGLLMASA) form a helical membrane-spanning segment. At 406 to 413 (GERETRFT) the chain is on the extracellular side.

This sequence belongs to the plant ureide permease (TC 2.A.7.19) family. As to expression, expressed in lateral roots, rosette leaves, stems, stipules, flower stigma, pedicels and the connective tissue between pollen sacks.

The protein resides in the membrane. Its function is as follows. Proton-coupled transporter that transports a wide spectrum of oxo derivatives of heterocyclic nitrogen compounds, including allantoin, uric acid and xanthine, but not adenine. Mediates transport of uracil and 5-fluorouracil (a toxic uracil analog). Proton-coupled transporter that transports a wide spectrum of oxo derivatives of heterocyclic nitrogen compounds, including allantoin, xanthine and uracil. This Arabidopsis thaliana (Mouse-ear cress) protein is Ureide permease 5.